Reading from the N-terminus, the 407-residue chain is Aurofusarin biosynthesis cluster protein S (407 aa).

A signal peptide spans 1 to 35 (MSKQKPSLWRALRALSFIISIPLLIQYLVLKWYST). 5 N-linked (GlcNAc...) asparagine glycosylation sites follow: asparagine 52, asparagine 174, asparagine 196, asparagine 274, and asparagine 312. 2 FAS1 domains span residues 52-192 (NLTV…DTVL) and 195-365 (PNST…DSIL).

In terms of assembly, might be part of an extracellular enzyme complex composed of GIP1, aurF, aurO and aurS.

The protein resides in the secreted. The protein localises to the extracellular space. It functions in the pathway pigment biosynthesis. Its function is as follows. Part of the gene cluster that mediates the biosynthesis of aurofusarin, a red mycelium pigment which is acting as a mycotoxin. The first step is performed by the polyketide synthase which condenses one acetyl-CoA and 6 malonyl-CoA units to form the first intermediate, the cyclic heptaketide and yellow pigment YWA1. The C2 hydroxyl group in the pyrone ring of YWA1 is probably formed during ring closure by an aldol-type cyclization reaction. The dehydratase aurZ then acts as the first tailoring enzyme in the aurofusarin biosynthetic pathway by converting YWA1 to nor-rubrofusarin. Nor-rubrofusarin is then methylated to rubrofusarin by the O-methyltransferase aurJ. Rubrofusarin is then transported across the plasma membrane by the rubrofusarin-specific pump aurT for further enzymatic processing by the extracellular complex composed of GIP1, aurF, aurO and aurS to yield aurofusarin. The polypeptide is Aurofusarin biosynthesis cluster protein S (Gibberella zeae (strain ATCC MYA-4620 / CBS 123657 / FGSC 9075 / NRRL 31084 / PH-1) (Wheat head blight fungus)).